The following is a 418-amino-acid chain: 3-isopropylmalate dehydratase large subunit 1 (418 aa).

Residues cysteine 298, cysteine 358, and cysteine 361 each coordinate [4Fe-4S] cluster.

Belongs to the aconitase/IPM isomerase family. LeuC type 2 subfamily. Heterodimer of LeuC and LeuD. It depends on [4Fe-4S] cluster as a cofactor.

The enzyme catalyses (2R,3S)-3-isopropylmalate = (2S)-2-isopropylmalate. Its pathway is amino-acid biosynthesis; L-leucine biosynthesis; L-leucine from 3-methyl-2-oxobutanoate: step 2/4. In terms of biological role, catalyzes the isomerization between 2-isopropylmalate and 3-isopropylmalate, via the formation of 2-isopropylmaleate. The sequence is that of 3-isopropylmalate dehydratase large subunit 1 from Archaeoglobus fulgidus (strain ATCC 49558 / DSM 4304 / JCM 9628 / NBRC 100126 / VC-16).